A 230-amino-acid chain; its full sequence is Peptidyl-prolyl cis-trans isomerase FKBP16-4, chloroplastic (230 aa).

A chloroplast-targeting transit peptide spans 1–56 (MILTMKLVHPLHHSLSSSIPFPSRKRQSKPYRCSLPSPGCEKVIRTETVLPPAPVS). One can recognise a PPIase FKBP-type domain in the interval 123-217 (GSRVAVHYVA…ELDIELLSIK (95 aa)).

This sequence belongs to the FKBP-type PPIase family.

It is found in the plastid. It localises to the chloroplast thylakoid lumen. The catalysed reaction is [protein]-peptidylproline (omega=180) = [protein]-peptidylproline (omega=0). In terms of biological role, PPIases accelerate the folding of proteins. It catalyzes the cis-trans isomerization of proline imidic peptide bonds in oligopeptides. The protein is Peptidyl-prolyl cis-trans isomerase FKBP16-4, chloroplastic (FKBP16-4) of Arabidopsis thaliana (Mouse-ear cress).